A 489-amino-acid polypeptide reads, in one-letter code: Cysteine--tRNA ligase (489 aa).

A Zn(2+)-binding site is contributed by C29. The 'HIGH' region motif lies at 31 to 41 (ITSYDYCHIGH). Residues C209, H234, and E238 each coordinate Zn(2+). A 'KMSKS' region motif is present at residues 266–270 (KMSKS). K269 is a binding site for ATP.

It belongs to the class-I aminoacyl-tRNA synthetase family. As to quaternary structure, monomer. Zn(2+) is required as a cofactor.

It localises to the cytoplasm. The enzyme catalyses tRNA(Cys) + L-cysteine + ATP = L-cysteinyl-tRNA(Cys) + AMP + diphosphate. In Desulfotalea psychrophila (strain LSv54 / DSM 12343), this protein is Cysteine--tRNA ligase.